The primary structure comprises 979 residues: Collagen alpha-2(I) chain (979 aa).

The disordered stretch occupies residues 1 to 979 (SGGFDFSFLP…FGYEGDFYRA (979 aa)). Proline 10, proline 13, proline 35, and proline 41 each carry 4-hydroxyproline. The segment covering 28–41 (LMGPRGPPGASGAP) has biased composition (low complexity). A 5-hydroxylysine; alternate modification is found at lysine 88. An O-linked (Gal...) hydroxylysine; alternate glycan is attached at lysine 88. Positions 128–157 (VGAPGPAGARGSDGSVGPVGPAGPIGSAGP) are enriched in low complexity. Gly residues predominate over residues 256 to 265 (GESGGKGEPG). A compositionally biased stretch (low complexity) spans 266–276 (SAGPQGPPGSS). Residues 298–307 (GLRGGPGSRG) are compositionally biased toward gly residues. 4-hydroxyproline occurs at positions 341 and 344. The segment covering 434–443 (GVQGGKGEQG) has biased composition (gly residues). Low complexity-rich tracts occupy residues 490–507 (PGES…SRGP) and 519–529 (EPGVVGAPGTA). Gly residues predominate over residues 530-548 (GPAGSGGPGERGAAGIPGG). Composition is skewed to low complexity over residues 570–599 (RGAP…PRGS) and 606–626 (VGPA…QPGA). The segment covering 627 to 636 (KGERGTKGPK) has biased composition (basic and acidic residues). Residues 644–654 (PTGPVGSAGPA) are compositionally biased toward low complexity. Over residues 664 to 673 (GSRGDGGPPG) the composition is skewed to gly residues. Over residues 675-684 (TGFPGAAGRT) the composition is skewed to low complexity. Gly residues predominate over residues 721–730 (GETGAGGPPG). Composition is skewed to low complexity over residues 738–765 (SGEP…LGLP) and 773–783 (LPGVAGAVGEP). Positions 784-802 (GPLGIGPPGARGPSGGDGL) are enriched in gly residues. Composition is skewed to low complexity over residues 811-833 (YAGN…VGPA) and 841-856 (EPGP…ALGP). Over residues 866-877 (RGDKGEPGDKGP) the composition is skewed to basic and acidic residues. Residues 951-961 (GPGPPGPPGPP) are compositionally biased toward pro residues.

The protein belongs to the fibrillar collagen family. In terms of assembly, trimers of one alpha 2(I) and two alpha 1(I) chains. Interacts (via C-terminus) with TMEM131 (via PapD-L domain); the interaction is direct and is involved in assembly and TRAPPIII ER-to-Golgi transport complex-dependent secretion of collagen. In terms of processing, prolines at the third position of the tripeptide repeating unit (G-X-Y) are hydroxylated in some or all of the chains. Expressed in bones.

It localises to the secreted. The protein localises to the extracellular space. The protein resides in the extracellular matrix. Functionally, type I collagen is a member of group I collagen (fibrillar forming collagen). The polypeptide is Collagen alpha-2(I) chain (Neocnus dousman (Slow ground sloth)).